Consider the following 452-residue polypeptide: Coproporphyrinogen III oxidase (452 aa).

Residues 10-15 (GGGISG), 36-37 (EP), 58-61 (GAEA), valine 242, tryptophan 390, and 426-428 (IGV) contribute to the FAD site.

The protein belongs to the protoporphyrinogen/coproporphyrinogen oxidase family. Coproporphyrinogen III oxidase subfamily. FAD serves as cofactor.

The protein resides in the cytoplasm. It carries out the reaction coproporphyrinogen III + 3 O2 = coproporphyrin III + 3 H2O2. It participates in porphyrin-containing compound metabolism; protoheme biosynthesis. Involved in coproporphyrin-dependent heme b biosynthesis. Catalyzes the oxidation of coproporphyrinogen III to coproporphyrin III. This Mycobacterium bovis (strain ATCC BAA-935 / AF2122/97) protein is Coproporphyrinogen III oxidase.